The following is a 338-amino-acid chain: Aspartate carbamoyltransferase catalytic subunit (338 aa).

R57 and T58 together coordinate carbamoyl phosphate. K86 provides a ligand contact to L-aspartate. R107, H135, and Q138 together coordinate carbamoyl phosphate. L-aspartate is bound by residues R172 and R234. Carbamoyl phosphate contacts are provided by L274 and P275.

Belongs to the aspartate/ornithine carbamoyltransferase superfamily. ATCase family. Heterododecamer (2C3:3R2) of six catalytic PyrB chains organized as two trimers (C3), and six regulatory PyrI chains organized as three dimers (R2).

It carries out the reaction carbamoyl phosphate + L-aspartate = N-carbamoyl-L-aspartate + phosphate + H(+). The protein operates within pyrimidine metabolism; UMP biosynthesis via de novo pathway; (S)-dihydroorotate from bicarbonate: step 2/3. Its function is as follows. Catalyzes the condensation of carbamoyl phosphate and aspartate to form carbamoyl aspartate and inorganic phosphate, the committed step in the de novo pyrimidine nucleotide biosynthesis pathway. The sequence is that of Aspartate carbamoyltransferase catalytic subunit from Cellvibrio japonicus (strain Ueda107) (Pseudomonas fluorescens subsp. cellulosa).